Reading from the N-terminus, the 226-residue chain is MPVKGGTKCIKYLLFGFNFIFWLAGIAVLAVGLWLRFDSQTKSIFEQDSQPSSFYTGVYILIGAGALMMLVGFLGCCGAVQESQCMLGLFFGFLLVIFAIEIAAAIWGYSHKDEVIQEVQEFYKDTYNKLKSKDEPQRDTLKAIHYALDCCGLAGGVEQFISDICPQKDILSSITVKPCPEAIKEVFHNKFHIIGAVGIGIAVVMIFGMIFSMILCCAIRRSREMV.

Residues 1–12 (MPVKGGTKCIKY) lie on the Cytoplasmic side of the membrane. Cys9 is lipidated: S-palmitoyl cysteine. A helical transmembrane segment spans residues 13–33 (LLFGFNFIFWLAGIAVLAVGL). At 34–53 (WLRFDSQTKSIFEQDSQPSS) the chain is on the extracellular side. The chain crosses the membrane as a helical span at residues 54-74 (FYTGVYILIGAGALMMLVGFL). Residues 75-85 (GCCGAVQESQC) are Cytoplasmic-facing. Residues Cys76, Cys77, and Cys85 are each lipidated (S-palmitoyl cysteine). Residues 86–109 (MLGLFFGFLLVIFAIEIAAAIWGY) form a helical membrane-spanning segment. Residues 110–193 (SHKDEVIQEV…KEVFHNKFHI (84 aa)) lie on the Extracellular side of the membrane. Disulfide bonds link Cys150-Cys179 and Cys151-Cys165. Residues 194 to 219 (IGAVGIGIAVVMIFGMIFSMILCCAI) traverse the membrane as a helical segment. 2 S-palmitoyl cysteine lipidation sites follow: Cys216 and Cys217. The Cytoplasmic segment spans residues 220 to 226 (RRSREMV).

It belongs to the tetraspanin (TM4SF) family. In terms of assembly, forms both disulfide-linked homodimers and higher homooligomers as well as heterooligomers with other members of the tetraspanin family. Interacts (via the second extracellular domain) with integrin ITGAV:ITGB3. Interacts with integrin ITGA6:ITGB1; interaction takes place in oocytes and is involved in sperm-egg fusion. Part of integrin-tetraspanin complexes composed of CD81, beta-1 and beta-2 integrins in the membrane of monocyte/macrophages. Interacts with CD63; identified in a complex with CD63 and ITGB3. Associates with CR2/CD21 and with PTGFRN/CD9P1. Part of a complex composed of CD9, CD81, PTGFRN and IGSF8. Interacts directly with IGSF8. Interacts with PDPN; this interaction is homophilic and attenuates platelet aggregation and pulmonary metastasis induced by PDPN. Interacts (on T cell side) with CD81 at immunological synapses between antigen-presenting cells and T cells. Palmitoylated at a low, basal level in unstimulated platelets. The level of palmitoylation increases when platelets are activated by thrombin (in vitro). The protein exists in three forms with molecular masses between 22 and 27 kDa, and is known to carry covalently linked fatty acids. Palmitoylation by ZDHHC2 regulates CD9 expression, association with other tetraspanin family proteins and function in cell adhesion.

It localises to the cell membrane. The protein resides in the membrane. It is found in the secreted. The protein localises to the extracellular exosome. Functionally, integral membrane protein associated with integrins, which regulates different processes, such as sperm-egg fusion, platelet activation and aggregation, and cell adhesion. Present at the cell surface of oocytes and plays a key role in sperm-egg fusion, possibly by organizing multiprotein complexes and the morphology of the membrane required for the fusion. In myoblasts, associates with CD81 and PTGFRN and inhibits myotube fusion during muscle regeneration. In macrophages, associates with CD81 and beta-1 and beta-2 integrins, and prevents macrophage fusion into multinucleated giant cells specialized in ingesting complement-opsonized large particles. Also prevents the fusion between mononuclear cell progenitors into osteoclasts in charge of bone resorption. Acts as a receptor for PSG17. Involved in platelet activation and aggregation. Regulates paranodal junction formation. Involved in cell adhesion, cell motility and tumor metastasis. The sequence is that of CD9 antigen from Felis catus (Cat).